Here is a 457-residue protein sequence, read N- to C-terminus: Prenyltransferase ucdE (457 aa).

Dimethylallyl diphosphate contacts are provided by R106, K198, K277, Y279, Y382, Y447, and Y451.

It belongs to the tryptophan dimethylallyltransferase family.

The protein operates within secondary metabolite biosynthesis. Its function is as follows. Nonribosomal peptide synthetase that mediates the biosynthesis of usterphenyllins and uscandidusins, p-terphenyl derivatives. Within the pathway, ucdE prenylates position C-5 of ring A of 3,15-dihydroxyterphenyllin to produce forms usterphenyllin B. UcdE further prenylates position C-14 of ring C of usterphenyllin B to form usterphenyllin A. The pathway begin with the biosynthesis of 4-hydroxyphenylpyruvate (HPPA) from L-tyrosine, possibly by the aminotransferase ucdG. The nonribosomal peptide synthetase ucdA then condenses two HPPA units to produce atromentin. The key step in this pathway is the reduction and dehydration of atromentin to form a terphenyl triol intermediate, performed by the NAD-dependent dehydrogenase ucdB. Further O-methylation by the methyltransferase ucdC forms terphenyllin carrying two methoxy moieties at C-9 and C-12, and subsequent dihydroxylation at C-3 of ring A and C-15 of ring C by the flavin-dependent oxygenase ucdD leads to 3,15-dihydroxyterphenyllin. Prenylation by ucdE at position C-5 of ring A forms usterphenyllin B, and is followed by a second prenylation at position C-14 of ring C to form usterphenyllin A. The following furan ring formation that leads to uscandidusins A and B was proven to be an unexpected spontaneous non-enzymatic reaction. The polypeptide is Prenyltransferase ucdE (Aspergillus ustus).